The following is a 288-amino-acid chain: 4-diphosphocytidyl-2-C-methyl-D-erythritol kinase (288 aa).

The active site involves Lys-8. Position 92–102 (92–102 (PVAAGMAGGST)) interacts with ATP. Asp-134 is an active-site residue.

Belongs to the GHMP kinase family. IspE subfamily.

The enzyme catalyses 4-CDP-2-C-methyl-D-erythritol + ATP = 4-CDP-2-C-methyl-D-erythritol 2-phosphate + ADP + H(+). It functions in the pathway isoprenoid biosynthesis; isopentenyl diphosphate biosynthesis via DXP pathway; isopentenyl diphosphate from 1-deoxy-D-xylulose 5-phosphate: step 3/6. In terms of biological role, catalyzes the phosphorylation of the position 2 hydroxy group of 4-diphosphocytidyl-2C-methyl-D-erythritol. The polypeptide is 4-diphosphocytidyl-2-C-methyl-D-erythritol kinase (Clostridium perfringens (strain 13 / Type A)).